Reading from the N-terminus, the 199-residue chain is Achaete-scute homolog 1 (199 aa).

The disordered stretch occupies residues 37–56 (PAEEQQASKAKPIKRQRSAS). In terms of domain architecture, bHLH spans 81-133 (AAVARRNERERNRVKLVNLGFATLREHVPNGAANKKMSKVETLRSAVEYIRAL). Over residues 162 to 179 (HDMNSMAGSPVSSYSSDE) the composition is skewed to polar residues. The segment at 162–189 (HDMNSMAGSPVSSYSSDEGSYDPLSPEE) is disordered.

Efficient DNA binding requires dimerization with another bHLH protein. As to expression, neuronal precursor cells.

The protein resides in the nucleus. Transcription factor that plays a key role in neuronal differentiation: acts as a pioneer transcription factor, accessing closed chromatin to allow other factors to bind and activate neural pathways. Directly binds the E box motif (5'-CANNTG-3') on promoters and promotes transcription of neuronal genes. The combination of three transcription factors, ASCL1, POU3F2/BRN2 and MYT1L, is sufficient to reprogram fibroblasts and other somatic cells into induced neuronal (iN) cells in vitro. The sequence is that of Achaete-scute homolog 1 (ascl1) from Xenopus laevis (African clawed frog).